A 394-amino-acid chain; its full sequence is Immune-associated nucleotide-binding protein 12 (394 aa).

The AIG1-type G domain maps to 45–251 (KPARTLLLVG…YMADLSHEIR (207 aa)). The tract at residues 54-61 (GRSGNGKS) is G1. Residues 54-62 (GRSGNGKSA) and Ser-75 contribute to the GTP site. Residues 81–85 (GVTTA) are G2. Residues 103 to 106 (DTPG) form a G3 region. The G4 stretch occupies residues 173–176 (TNED). The tract at residues 210-212 (RNR) is G5. Position 211 (Asn-211) interacts with GTP. Residues 289-387 (NQQLRQMMER…KQMATDLQKS (99 aa)) adopt a coiled-coil conformation.

It belongs to the TRAFAC class TrmE-Era-EngA-EngB-Septin-like GTPase superfamily. AIG1/Toc34/Toc159-like paraseptin GTPase family. IAN subfamily.

This is Immune-associated nucleotide-binding protein 12 from Arabidopsis thaliana (Mouse-ear cress).